The chain runs to 404 residues: G2/mitotic-specific cyclin-B1 (404 aa).

The protein belongs to the cyclin family. Cyclin AB subfamily. In terms of assembly, interacts with the CDK1 protein kinase to form a serine/threonine kinase holoenzyme complex also known as maturation promoting factor (MPF). The cyclin subunit imparts substrate specificity to the complex.

Functionally, essential for the control of the cell cycle at the G2/M (mitosis) transition. The sequence is that of G2/mitotic-specific cyclin-B1 (ccnb1) from Oryzias latipes (Japanese rice fish).